A 183-amino-acid polypeptide reads, in one-letter code: TATA-box-binding protein 2 (183 aa).

2 tandem repeats follow at residues 8-84 (IENV…AKKL) and 99-177 (VQNI…RQQL).

The protein belongs to the TBP family.

Its function is as follows. General factor that plays a role in the activation of archaeal genes transcribed by RNA polymerase. Binds specifically to the TATA box promoter element which lies close to the position of transcription initiation. The chain is TATA-box-binding protein 2 from Methanosarcina mazei (strain ATCC BAA-159 / DSM 3647 / Goe1 / Go1 / JCM 11833 / OCM 88) (Methanosarcina frisia).